Consider the following 827-residue polypeptide: Ribosome biogenesis protein ERB1 (827 aa).

Residues Met1–Pro129 form a disordered region. Residues Asp7–Lys18 show a composition bias toward basic and acidic residues. Positions Cys45–Val60 are enriched in acidic residues. A compositionally biased stretch (low complexity) spans Leu61–Ser77. Composition is skewed to acidic residues over residues Gly81–Ala99 and Glu108–Asp124. Positions Arg291–Ser409 are required for interaction with NOP7. The tract at residues Ser409–Pro445 is required for interaction with YTM1. 6 WD repeats span residues Gly461–Lys500, Asn509–Glu549, Lys657–Lys695, Pro698–Lys737, Tyr741–Lys780, and Val796–Thr827.

Belongs to the WD repeat BOP1/ERB1 family. In terms of assembly, component of the NOP7 complex, composed of ERB1, NOP7 and YTM1. The complex is held together by ERB1, which interacts with NOP7 via its N-terminal domain and with YTM1 via a high-affinity interaction between the seven-bladed beta-propeller domains of the 2 proteins. The NOP7 complex associates with the 66S pre-ribosome.

The protein resides in the nucleus. The protein localises to the nucleolus. It localises to the nucleoplasm. In terms of biological role, component of the NOP7 complex, which is required for maturation of the 25S and 5.8S ribosomal RNAs and formation of the 60S ribosome. In Eremothecium gossypii (strain ATCC 10895 / CBS 109.51 / FGSC 9923 / NRRL Y-1056) (Yeast), this protein is Ribosome biogenesis protein ERB1.